We begin with the raw amino-acid sequence, 667 residues long: UvrABC system protein B (667 aa).

Positions 24 to 195 (EGLRRGDRFQ…SSGGVFHLRG (172 aa)) constitute a Helicase ATP-binding domain. 37–44 (GVTGSGKT) lines the ATP pocket. The Beta-hairpin signature appears at 90–113 (YYDYYQPEAYIPTKDLYIEKDADI). The Helicase C-terminal domain occupies 428–581 (QVDDFIEEVQ…QLMYNIEHDI (154 aa)). Positions 626–661 (EEYLALLEEEMWRASSELRYEDAAMLRDEMLRIKRE) constitute a UVR domain.

It belongs to the UvrB family. Forms a heterotetramer with UvrA during the search for lesions. Interacts with UvrC in an incision complex.

The protein resides in the cytoplasm. Its function is as follows. The UvrABC repair system catalyzes the recognition and processing of DNA lesions. A damage recognition complex composed of 2 UvrA and 2 UvrB subunits scans DNA for abnormalities. Upon binding of the UvrA(2)B(2) complex to a putative damaged site, the DNA wraps around one UvrB monomer. DNA wrap is dependent on ATP binding by UvrB and probably causes local melting of the DNA helix, facilitating insertion of UvrB beta-hairpin between the DNA strands. Then UvrB probes one DNA strand for the presence of a lesion. If a lesion is found the UvrA subunits dissociate and the UvrB-DNA preincision complex is formed. This complex is subsequently bound by UvrC and the second UvrB is released. If no lesion is found, the DNA wraps around the other UvrB subunit that will check the other stand for damage. The protein is UvrABC system protein B of Kosmotoga olearia (strain ATCC BAA-1733 / DSM 21960 / TBF 19.5.1).